Reading from the N-terminus, the 254-residue chain is HLA class II histocompatibility antigen, DR alpha chain (254 aa).

A signal peptide spans 1 to 25; it reads MAISGVPVLGFFIIAVLMSAQESWA. The segment at 26–109 is alpha-1; the sequence is IKEEHVIIQA…KRSNYTPITN (84 aa). Residues 26–216 lie on the Extracellular side of the membrane; the sequence is IKEEHVIIQA…APSPLPETTE (191 aa). Asparagine 103 and asparagine 143 each carry an N-linked (GlcNAc...) asparagine glycan. An alpha-2 region spans residues 110-203; sequence VPPEVTVLTN…GLDEPLLKHW (94 aa). The Ig-like C1-type domain occupies 112–204; it reads PEVTVLTNSP…LDEPLLKHWE (93 aa). Cysteine 132 and cysteine 188 form a disulfide bridge. Positions 204 to 216 are connecting peptide; that stretch reads EFDAPSPLPETTE. Residues 217-239 traverse the membrane as a helical segment; it reads NVVCALGLTVGLVGIIIGTIFII. Residues 240 to 254 lie on the Cytoplasmic side of the membrane; sequence KGLRKSNAAERRGPL. A Glycyl lysine isopeptide (Lys-Gly) (interchain with G-Cter in ubiquitin) cross-link involves residue lysine 244.

Belongs to the MHC class II family. As to quaternary structure, heterotrimer that consists of an alpha chain HLA-DRA, a beta chain HLA-DRB and a peptide (peptide-MHCII). Newly synthesized alpha and beta chains forms a heterodimer (MHCII) that associates with the CD74/invariant chain (Ii) in the endoplasmic reticulum (ER). Ii is a trimer composed of three subunits and each subunit interacts with one MHCII dimer, blocking the peptide-binding cleft. As a result, MHCII molecules cannot bind peptides present in the ER. The complex of MHCII and CD74/Ii is transported in vesicles from ER to Golgi to lysosomes, where it encounters antigenic peptides generated via proteolysis of endocytosed antigens. MHCII dimers are dissociated from CD74/Ii by the combined action of proteolysis and HLA-DM. Lysosomal enzymes such as cathepsin, degrade CD74/Ii leaving a 24 amino acid remnant called class II-associated Ii or CLIP. Interacts (via the peptide binding cleft) with CLIP; this interaction inhibits antigen peptide binding before entry in the endosomal compartment. The displacement of CLIP and replacement by a high affinity peptide in lysosomes is performed by HLA-DM heterodimer. HLA-DM catalyzes CLIP dissociation from MHCII, stabilizes empty MHCII and mediates the selection of high affinity peptides. Interacts with HLA-DM heterodimer; this interaction is direct. Interacts (via alpha-1 domain) with TCR (via CDRs). Interacts (via alpha-2 domain) with CD4 (via Ig-like V-type domain); this interaction increases the affinity of TCR for peptide-MHCII. In terms of assembly, (Microbial infection) Interacts with Epstein-Barr virus BZLF2/gp42. (Microbial infection) Interacts with Staphylococcus aureus enterotoxin A/entA, enterotoxin B/entB, enterotoxin C1/entC1, enterotoxin D/entD, and enterotoxin H/entH. Post-translationally, ubiquitinated by MARCHF1 or MARCHF8 at Lys-244 leading to down-regulation of MHCII. When associated with ubiquitination of the beta chain at 'Lys-254', the down-regulation of MHCII may be highly effective. Expressed in professional APCs: macrophages, dendritic cells and B cells (at protein level). Expressed in thymic epithelial cells (at protein level).

Its subcellular location is the cell membrane. The protein resides in the endoplasmic reticulum membrane. The protein localises to the early endosome membrane. It localises to the late endosome membrane. It is found in the lysosome membrane. Its subcellular location is the autolysosome membrane. In terms of biological role, an alpha chain of antigen-presenting major histocompatibility complex class II (MHCII) molecule. In complex with the beta chain HLA-DRB, displays antigenic peptides on professional antigen presenting cells (APCs) for recognition by alpha-beta T cell receptor (TCR) on HLA-DR-restricted CD4-positive T cells. This guides antigen-specific T-helper effector functions, both antibody-mediated immune response and macrophage activation, to ultimately eliminate the infectious agents and transformed cells. Typically presents extracellular peptide antigens of 10 to 30 amino acids that arise from proteolysis of endocytosed antigens in lysosomes. In the tumor microenvironment, presents antigenic peptides that are primarily generated in tumor-resident APCs likely via phagocytosis of apoptotic tumor cells or macropinocytosis of secreted tumor proteins. Presents peptides derived from intracellular proteins that are trapped in autolysosomes after macroautophagy, a mechanism especially relevant for T cell selection in the thymus and central immune tolerance. The selection of the immunodominant epitopes follows two processing modes: 'bind first, cut/trim later' for pathogen-derived antigenic peptides and 'cut first, bind later' for autoantigens/self-peptides. The anchor residue at position 1 of the peptide N-terminus, usually a large hydrophobic residue, is essential for high affinity interaction with MHCII molecules. This chain is HLA class II histocompatibility antigen, DR alpha chain (HLA-DRA), found in Homo sapiens (Human).